Consider the following 111-residue polypeptide: Disintegrin acostatin-alpha (111 aa).

The N-terminal stretch at 1–20 (MIQVLLVTLCLAVFPYQGSS) is a signal peptide. Residues 21 to 46 (IILESGNVNDYEVVYPRKVTALPKGA) constitute a propeptide that is removed on maturation. The Disintegrin domain maps to 47-111 (IQPKNPCCDA…GDCPRKHFYA (65 aa)). A Pyrrolidone carboxylic acid; in Disintegrin acostatin-alpha, processed form modification is found at glutamine 48. 4 disulfide bridges follow: cysteine 53/cysteine 76, cysteine 67/cysteine 73, cysteine 72/cysteine 97, and cysteine 85/cysteine 104. The short motif at 89–91 (RGD) is the Cell attachment site element. A propeptide spanning residues 110–111 (YA) is cleaved from the precursor.

The protein belongs to the disintegrin family. Dimeric disintegrin subfamily. As to quaternary structure, heterodimer with subunit beta; disulfide-linked. As to expression, expressed by the venom gland.

The protein resides in the secreted. In terms of biological role, inhibits fibrinogen interaction with platelets. Acts by binding to alpha-IIb/beta-3 (ITGA2B/ITGB3) on the platelet surface and inhibits ADP-induced platelet aggregation in human platelet-rich plasma. This chain is Disintegrin acostatin-alpha, found in Agkistrodon contortrix contortrix (Southern copperhead).